The chain runs to 283 residues: Phosphatidylglycerol--prolipoprotein diacylglyceryl transferase (283 aa).

A run of 4 helical transmembrane segments spans residues 19-39 (IGPITIRWYGLLIATAVLIGV), 59-79 (LSIWLVIGAIPAARIYYVLFQ), 90-110 (IIAIWQGGIAIHGAIIGGTLA), and 120-140 (VPFWQLADLVAPSLILGQAIG). Arg-141 provides a ligand contact to a 1,2-diacyl-sn-glycero-3-phospho-(1'-sn-glycerol). The next 3 helical transmembrane spans lie at 181 to 201 (TFLYESIWDLMVFALLITLFF), 212 to 232 (VGTLFMVYLATYSLGRLWIEG), and 245 to 265 (IAQVVSLTGIALGLAGLAWLY).

This sequence belongs to the Lgt family.

Its subcellular location is the cell inner membrane. The enzyme catalyses L-cysteinyl-[prolipoprotein] + a 1,2-diacyl-sn-glycero-3-phospho-(1'-sn-glycerol) = an S-1,2-diacyl-sn-glyceryl-L-cysteinyl-[prolipoprotein] + sn-glycerol 1-phosphate + H(+). Its pathway is protein modification; lipoprotein biosynthesis (diacylglyceryl transfer). Catalyzes the transfer of the diacylglyceryl group from phosphatidylglycerol to the sulfhydryl group of the N-terminal cysteine of a prolipoprotein, the first step in the formation of mature lipoproteins. This chain is Phosphatidylglycerol--prolipoprotein diacylglyceryl transferase, found in Nostoc sp. (strain PCC 7120 / SAG 25.82 / UTEX 2576).